We begin with the raw amino-acid sequence, 135 residues long: Small ribosomal subunit protein bS18 (135 aa).

The segment at 1–65 (MARPDMGGPK…GDEGGGRRGF (65 aa)) is disordered. The segment covering 9-41 (PKTGGFGGPRSGGFGGGGGGGGGFGGGGFGGGR) has biased composition (gly residues). Residues 42-61 (GGDRGDRGDRDDRGGDEGGG) are compositionally biased toward basic and acidic residues.

The protein belongs to the bacterial ribosomal protein bS18 family. Part of the 30S ribosomal subunit. Forms a tight heterodimer with protein bS6.

Functionally, binds as a heterodimer with protein bS6 to the central domain of the 16S rRNA, where it helps stabilize the platform of the 30S subunit. In Anaeromyxobacter sp. (strain K), this protein is Small ribosomal subunit protein bS18.